We begin with the raw amino-acid sequence, 129 residues long: Phosphoribosyl-AMP cyclohydrolase (129 aa).

Asp-78 is a Mg(2+) binding site. Cys-79 contacts Zn(2+). 2 residues coordinate Mg(2+): Asp-80 and Asp-82. Residues Cys-96 and Cys-103 each coordinate Zn(2+).

Belongs to the PRA-CH family. Homodimer. Mg(2+) serves as cofactor. Requires Zn(2+) as cofactor.

Its subcellular location is the cytoplasm. It carries out the reaction 1-(5-phospho-beta-D-ribosyl)-5'-AMP + H2O = 1-(5-phospho-beta-D-ribosyl)-5-[(5-phospho-beta-D-ribosylamino)methylideneamino]imidazole-4-carboxamide. It participates in amino-acid biosynthesis; L-histidine biosynthesis; L-histidine from 5-phospho-alpha-D-ribose 1-diphosphate: step 3/9. Functionally, catalyzes the hydrolysis of the adenine ring of phosphoribosyl-AMP. In Nitrosomonas europaea (strain ATCC 19718 / CIP 103999 / KCTC 2705 / NBRC 14298), this protein is Phosphoribosyl-AMP cyclohydrolase.